The sequence spans 503 residues: Betaine aldehyde dehydrogenase 2 (503 aa).

Residue 161-170 (WNYPLLMATW) participates in betaine aldehyde binding. Residue 238–243 (GSYETG) participates in NAD(+) binding. Betaine aldehyde contacts are provided by residues Glu260, 292–295 (QICS), and Cys453. Residues Glu260 and Cys294 contribute to the active site. 4-aminobutanal is bound by residues 260-261 (EL) and Cys294. Trp459 serves as a coordination point for 4-aminobutanal. The Microbody targeting signal motif lies at 501-503 (SKL).

Belongs to the aldehyde dehydrogenase family. As to quaternary structure, homodimer.

Its subcellular location is the peroxisome. The protein localises to the cytoplasm. It carries out the reaction betaine aldehyde + NAD(+) + H2O = glycine betaine + NADH + 2 H(+). Its pathway is amine and polyamine biosynthesis; betaine biosynthesis via choline pathway; betaine from betaine aldehyde: step 1/1. Its function is as follows. Dehydrogenase that can use N-acetyl-c-aminobutyraldehyde (NAGABald), gamma-guanidinobutyraldehyde (GGBald), betaine aldehyde (Bet-ald), gamma-aminobutyraldehyde (GAB-ald), acetaldehyde, 4-aminobutylaldehyde (AB-ald), 3-aminopropionaldehyde (AP-ald), 4-N-trimethylaminobutyraldehyde (TMAB-ald) and 3-N-trimethylaminopropionaldehyde (TMAP-ald) as substrates. Catalyzes the oxidation of GAB-ald more efficiently than Bet-ald. Mediates the conversion of GAB-ald into gamma-aminobutyric acid (GABA), and prevents the formation of 2-acetyl-1-pyrroline (2AP) which gives fragrant rice its aromatic properties. The polypeptide is Betaine aldehyde dehydrogenase 2 (BADH2) (Oryza sativa subsp. indica (Rice)).